We begin with the raw amino-acid sequence, 399 residues long: Succinate--CoA ligase [ADP-forming] subunit beta (399 aa).

The region spanning lysine 9–glutamate 254 is the ATP-grasp domain. ATP is bound by residues lysine 46, glycine 53–glycine 55, valine 112, and glutamate 117. The Mg(2+) site is built by asparagine 209 and aspartate 223. Residues asparagine 274 and glycine 331–methionine 333 each bind substrate.

It belongs to the succinate/malate CoA ligase beta subunit family. Heterotetramer of two alpha and two beta subunits. The cofactor is Mg(2+).

It catalyses the reaction succinate + ATP + CoA = succinyl-CoA + ADP + phosphate. The catalysed reaction is GTP + succinate + CoA = succinyl-CoA + GDP + phosphate. It functions in the pathway carbohydrate metabolism; tricarboxylic acid cycle; succinate from succinyl-CoA (ligase route): step 1/1. Its function is as follows. Succinyl-CoA synthetase functions in the citric acid cycle (TCA), coupling the hydrolysis of succinyl-CoA to the synthesis of either ATP or GTP and thus represents the only step of substrate-level phosphorylation in the TCA. The beta subunit provides nucleotide specificity of the enzyme and binds the substrate succinate, while the binding sites for coenzyme A and phosphate are found in the alpha subunit. In Erythrobacter litoralis (strain HTCC2594), this protein is Succinate--CoA ligase [ADP-forming] subunit beta.